Consider the following 392-residue polypeptide: Putative RNA-binding protein Luc7-like 2 (392 aa).

At Ser-18 the chain carries Phosphoserine. Residues 102-177 are a coiled coil; that stretch reads EVAKKRLAET…EAEEVYRNSM (76 aa). Over residues 235–257 the composition is skewed to basic and acidic residues; it reads KQEKRNQERLKRREEREREEREK. The tract at residues 235-392 is disordered; it reads KQEKRNQERL…SSEEREAGEI (158 aa). Residues 258–321 are compositionally biased toward basic residues; it reads LRRSRSHSKN…RSRSHQRSRH (64 aa). 2 positions are modified to 5-hydroxylysine; by JMJD6: Lys-266 and Lys-269. Composition is skewed to basic and acidic residues over residues 337–364 and 377–392; these read KERFRDQDLASCDRDRSSRDRSPRDRDR and RSEDRRSSEEREAGEI.

This sequence belongs to the Luc7 family. In terms of assembly, interacts with SCNM1.

It localises to the nucleus speckle. It is found in the nucleus. Its subcellular location is the nucleoplasm. In terms of biological role, may bind to RNA via its Arg/Ser-rich domain. In Homo sapiens (Human), this protein is Putative RNA-binding protein Luc7-like 2 (LUC7L2).